The following is a 110-amino-acid chain: Large ribosomal subunit protein P2 (110 aa).

The interval Ala-63 to Asp-110 is disordered. The span at Ala-86 to Glu-95 shows a compositional bias: basic and acidic residues.

The protein belongs to the eukaryotic ribosomal protein P1/P2 family. P1 and P2 exist as dimers at the large ribosomal subunit. Phosphorylated.

Plays an important role in the elongation step of protein synthesis. This Cryptochiton stelleri (Giant gumboot chiton) protein is Large ribosomal subunit protein P2.